Reading from the N-terminus, the 30-residue chain is Dermaseptin-DI4 (30 aa).

Expressed by the skin glands.

It is found in the secreted. Antibacterial activity against Gram-positive bacteria S.aureus and E.faecalis, and Gram-negative bacteria P.aeruginosa and E.coli. In Phyllomedusa distincta (Monkey frog), this protein is Dermaseptin-DI4.